Reading from the N-terminus, the 407-residue chain is MRILYFDCFAGASGDMILGALLDLGIDVGIFKRELAGLNLDGFDIAVEKKVINSIAVTDVNVIVKEECNHHTGHHHHCERNLADIEKIIDESSLKDNVKRLSKKIFSEIARAEAKVHNKSIEDVHFHEVGAIDSIVDIVGTAICLDLLKVDKIYSSPMHDGTGFIECQHGKLPVPVPAVLEMLKESNIPYITEDVNTELLTPTGLGIIKCVASKFGPMPPMTIEKVGYGAGKRQTGRFNALRCILGNAKEKEKIDDEICMLETNIDDMNPEILGYVMNRLFENGALDVFYTPVYMKKNRPGVLLTVLTDKEHEEKLVDIILTETTTLGIRKTTAQRYVLEREIKHVNTEFGKIRVKESSFGDYKKYSPEFEDCKKVAQELKIPLSKVYDAVNKAILVFEERNENALQ.

The protein belongs to the LarC family.

The catalysed reaction is Ni(II)-pyridinium-3,5-bisthiocarboxylate mononucleotide = pyridinium-3,5-bisthiocarboxylate mononucleotide + Ni(2+). Involved in the biosynthesis of a nickel-pincer cofactor ((SCS)Ni(II) pincer complex). Binds Ni(2+), and functions in nickel delivery to pyridinium-3,5-bisthiocarboxylic acid mononucleotide (P2TMN), to form the mature cofactor. Is thus probably required for the activation of nickel-pincer cofactor-dependent enzymes. This Acetivibrio thermocellus (strain ATCC 27405 / DSM 1237 / JCM 9322 / NBRC 103400 / NCIMB 10682 / NRRL B-4536 / VPI 7372) (Clostridium thermocellum) protein is Pyridinium-3,5-bisthiocarboxylic acid mononucleotide nickel insertion protein.